Here is a 264-residue protein sequence, read N- to C-terminus: Glucosamine-6-phosphate deaminase (264 aa).

D72 serves as the catalytic Proton acceptor; for enolization step. D141 acts as the For ring-opening step in catalysis. The Proton acceptor; for ring-opening step role is filled by H143. E148 (for ring-opening step) is an active-site residue.

Belongs to the glucosamine/galactosamine-6-phosphate isomerase family. NagB subfamily. Homohexamer.

The catalysed reaction is alpha-D-glucosamine 6-phosphate + H2O = beta-D-fructose 6-phosphate + NH4(+). Its pathway is amino-sugar metabolism; N-acetylneuraminate degradation; D-fructose 6-phosphate from N-acetylneuraminate: step 5/5. Allosterically activated by N-acetylglucosamine 6-phosphate (GlcNAc6P). Functionally, catalyzes the reversible isomerization-deamination of glucosamine 6-phosphate (GlcN6P) to form fructose 6-phosphate (Fru6P) and ammonium ion. The protein is Glucosamine-6-phosphate deaminase of Glaesserella parasuis serovar 5 (strain SH0165) (Haemophilus parasuis).